The primary structure comprises 109 residues: B melanoma antigen 3 (109 aa).

The signal sequence occupies residues 1–17 (MAAGVVFLALSAQLLQA).

Belongs to the BAGE family. As to expression, not expressed in normal tissues except in testis. Expressed in melanoma, bladder and lung carcinomas.

It localises to the secreted. Its function is as follows. Unknown. Candidate gene encoding tumor antigens. The protein is B melanoma antigen 3 (BAGE3) of Homo sapiens (Human).